Consider the following 706-residue polypeptide: Elongation factor G (706 aa).

Residues 15 to 291 (LKTRNIGISA…GVLDYLASPV (277 aa)) enclose the tr-type G domain. Residues 24-31 (AHIDSGKT), 91-95 (DTPGH), and 145-148 (NKLD) each bind GTP.

This sequence belongs to the TRAFAC class translation factor GTPase superfamily. Classic translation factor GTPase family. EF-G/EF-2 subfamily.

The protein localises to the cytoplasm. In terms of biological role, catalyzes the GTP-dependent ribosomal translocation step during translation elongation. During this step, the ribosome changes from the pre-translocational (PRE) to the post-translocational (POST) state as the newly formed A-site-bound peptidyl-tRNA and P-site-bound deacylated tRNA move to the P and E sites, respectively. Catalyzes the coordinated movement of the two tRNA molecules, the mRNA and conformational changes in the ribosome. The sequence is that of Elongation factor G from Leptospira borgpetersenii serovar Hardjo-bovis (strain L550).